The sequence spans 125 residues: Small ribosomal subunit protein uS12 (125 aa).

At Asp-89 the chain carries 3-methylthioaspartic acid.

The protein belongs to the universal ribosomal protein uS12 family. As to quaternary structure, part of the 30S ribosomal subunit. Contacts proteins S8 and S17. May interact with IF1 in the 30S initiation complex.

In terms of biological role, with S4 and S5 plays an important role in translational accuracy. Its function is as follows. Interacts with and stabilizes bases of the 16S rRNA that are involved in tRNA selection in the A site and with the mRNA backbone. Located at the interface of the 30S and 50S subunits, it traverses the body of the 30S subunit contacting proteins on the other side and probably holding the rRNA structure together. The combined cluster of proteins S8, S12 and S17 appears to hold together the shoulder and platform of the 30S subunit. This chain is Small ribosomal subunit protein uS12, found in Clostridium kluyveri (strain ATCC 8527 / DSM 555 / NBRC 12016 / NCIMB 10680 / K1).